Here is a 553-residue protein sequence, read N- to C-terminus: Flotillin family inner membrane protein YqiK (553 aa).

At 1–9 the chain is on the periplasmic side; the sequence is MDDIVNSVP. A helical membrane pass occupies residues 10–30; the sequence is SWMFTAIIAVCILFIIGIIFA. At 31–553 the chain is on the cytoplasmic side; sequence RLYRRASAEQ…STTPVEEKAE (523 aa).

This sequence belongs to the band 7/mec-2 family. Flotillin subfamily. Homooligomerizes.

It localises to the cell inner membrane. Its subcellular location is the membrane raft. Functionally, found in membrane microdomains that may be equivalent to eukaryotic membrane rafts. FMMs are highly dynamic and increase in number as cells age. Flotillins are thought to be important factors in membrane fluidity. In Escherichia coli (strain K12), this protein is Flotillin family inner membrane protein YqiK (yqiK).